The following is a 244-amino-acid chain: UL16-binding protein 1 (244 aa).

An N-terminal signal peptide occupies residues 1-25; sequence MAAAASPAFLLCLPLLHLLSGWSRA. An MHC class I alpha-1 like region spans residues 26-117; the sequence is GWVDTHCLCY…IQVENLIPIE (92 aa). Cysteines 50 and 66 form a disulfide. An N-linked (GlcNAc...) asparagine glycan is attached at Asn82. The MHC class I alpha-2 like stretch occupies residues 118–208; it reads PLTLQARMSC…MYWEQMLDPT (91 aa). An intrachain disulfide couples Cys127 to Cys190. Gly216 carries the GPI-anchor amidated glycine lipid modification. The propeptide at 217–244 is removed in mature form; sequence TTQPKAMATTLSPWSLLIIFLCFILAGR.

The protein belongs to the MHC class I family. As to quaternary structure, interacts with KLRK1/NKG2D. Does not bind to beta2-microglobulin. (Microbial infection) In CMV-infected cells, interacts with the viral glycoprotein UL16; this interaction causes ULBP1 retention in the endoplasmic reticulum and cis-Golgi and prevents binding to and activation of KLRK1/NKG2D, providing CMV with an immune evasion mechanism. Expressed in T-cells, B-cells, erythroleukemia cell lines and in a wide range of tissues including heart, brain, lung, liver, testis, lymph node, thymus, tonsil and bone marrow. Also found in fetal heart, brain, lung and liver.

The protein localises to the cell membrane. Its subcellular location is the endoplasmic reticulum. In terms of biological role, binds and activates the KLRK1/NKG2D receptor, mediating natural killer cell cytotoxicity. The protein is UL16-binding protein 1 (ULBP1) of Homo sapiens (Human).